Here is a 74-residue protein sequence, read N- to C-terminus: Pelophylaxin-3 (74 aa).

A signal peptide spans 1-22 (MFTLKKSLLLVFFLGTISLSLC). A propeptide spanning residues 23 to 39 (EDERNADEDDGEMTEEV) is cleaved from the precursor. Residues C68 and C74 are joined by a disulfide bond.

Expressed by the skin glands.

It localises to the secreted. Its function is as follows. Antimicrobial peptide. This Pelophylax fukienensis (Fukien gold-striped pond frog) protein is Pelophylaxin-3.